A 634-amino-acid polypeptide reads, in one-letter code: tRNA uridine 5-carboxymethylaminomethyl modification enzyme MnmG (634 aa).

14–19 serves as a coordination point for FAD; it reads GGGHAG. 279 to 293 is a binding site for NAD(+); sequence GPRYCPSIEDKVVRF.

It belongs to the MnmG family. As to quaternary structure, homodimer. Heterotetramer of two MnmE and two MnmG subunits. The cofactor is FAD.

The protein resides in the cytoplasm. NAD-binding protein involved in the addition of a carboxymethylaminomethyl (cmnm) group at the wobble position (U34) of certain tRNAs, forming tRNA-cmnm(5)s(2)U34. This Xanthomonas euvesicatoria pv. vesicatoria (strain 85-10) (Xanthomonas campestris pv. vesicatoria) protein is tRNA uridine 5-carboxymethylaminomethyl modification enzyme MnmG.